A 268-amino-acid chain; its full sequence is Undecaprenyl-diphosphatase (268 aa).

The next 7 membrane-spanning stretches (helical) occupy residues 42-62 (VPGKVFEVVIQLGAILAICVL), 86-106 (AIFVALIPAGLLGVLYHDFIL), 108-128 (VLFTPYVVCAALITGGIAIVV), 158-178 (IALVPGVSRSGATILGALLVG), 184-204 (AAEFSFFLAIPVMLGASVVSL), 218-238 (LIAAGFIAAFISALLVVKWLV), and 246-266 (FTVFGWYRILFGSLLLIYFSL).

This sequence belongs to the UppP family.

The protein localises to the cell inner membrane. The enzyme catalyses di-trans,octa-cis-undecaprenyl diphosphate + H2O = di-trans,octa-cis-undecaprenyl phosphate + phosphate + H(+). Its function is as follows. Catalyzes the dephosphorylation of undecaprenyl diphosphate (UPP). Confers resistance to bacitracin. This chain is Undecaprenyl-diphosphatase, found in Parvibaculum lavamentivorans (strain DS-1 / DSM 13023 / NCIMB 13966).